The sequence spans 447 residues: Ribulose bisphosphate carboxylase large chain (447 aa).

Substrate is bound by residues Asn89 and Thr139. Lys141 serves as the catalytic Proton acceptor. Residue Lys143 coordinates substrate. Mg(2+)-binding residues include Lys167, Asp169, and Glu170. Residue Lys167 is modified to N6-carboxylysine. His260 (proton acceptor) is an active-site residue. Substrate contacts are provided by Arg261, His293, and Ser345.

The protein belongs to the RuBisCO large chain family. Type I subfamily. Heterohexadecamer of 8 large chains and 8 small chains; disulfide-linked. The disulfide link is formed within the large subunit homodimers. The cofactor is Mg(2+). The disulfide bond which can form in the large chain dimeric partners within the hexadecamer appears to be associated with oxidative stress and protein turnover.

The protein localises to the plastid. It is found in the chloroplast. The catalysed reaction is 2 (2R)-3-phosphoglycerate + 2 H(+) = D-ribulose 1,5-bisphosphate + CO2 + H2O. It carries out the reaction D-ribulose 1,5-bisphosphate + O2 = 2-phosphoglycolate + (2R)-3-phosphoglycerate + 2 H(+). Functionally, ruBisCO catalyzes two reactions: the carboxylation of D-ribulose 1,5-bisphosphate, the primary event in carbon dioxide fixation, as well as the oxidative fragmentation of the pentose substrate in the photorespiration process. Both reactions occur simultaneously and in competition at the same active site. This is Ribulose bisphosphate carboxylase large chain from Ligustrum vulgare (Common privet).